Consider the following 365-residue polypeptide: Undecaprenyl-phosphate alpha-N-acetylglucosaminyl 1-phosphate transferase (365 aa).

A run of 10 helical transmembrane segments spans residues 3–23, 45–65, 99–119, 132–152, 157–177, 187–207, 213–233, 242–262, 293–313, and 315–335; these read LLTM…FLFV, GLIP…AFLI, IRAF…GLYL, VLGP…INAF, GIDG…GILL, LWCF…LGLL, VFMG…ILLQ, INPV…IAIM, QAFV…VIGE, and LTFI…LLYG.

Belongs to the glycosyltransferase 4 family. WecA subfamily. Mg(2+) is required as a cofactor. Mn(2+) serves as cofactor.

The protein localises to the cell inner membrane. It carries out the reaction di-trans,octa-cis-undecaprenyl phosphate + UDP-N-acetyl-alpha-D-glucosamine = N-acetyl-alpha-D-glucosaminyl-di-trans,octa-cis-undecaprenyl diphosphate + UMP. The protein operates within bacterial outer membrane biogenesis; LPS O-antigen biosynthesis. It participates in bacterial outer membrane biogenesis; enterobacterial common antigen biosynthesis. Catalyzes the transfer of the GlcNAc-1-phosphate moiety from UDP-GlcNAc onto the carrier lipid undecaprenyl phosphate (C55-P), yielding GlcNAc-pyrophosphoryl-undecaprenyl (GlcNAc-PP-C55). In Yersinia pestis, this protein is Undecaprenyl-phosphate alpha-N-acetylglucosaminyl 1-phosphate transferase.